Reading from the N-terminus, the 309-residue chain is Protein FdhE homolog (309 aa).

This sequence belongs to the FdhE family.

It is found in the cytoplasm. Necessary for formate dehydrogenase activity. The sequence is that of Protein FdhE homolog from Enterobacter sp. (strain 638).